Consider the following 256-residue polypeptide: UPF0246 protein Sde_3824 (256 aa).

Belongs to the UPF0246 family.

The protein is UPF0246 protein Sde_3824 of Saccharophagus degradans (strain 2-40 / ATCC 43961 / DSM 17024).